The chain runs to 679 residues: Acetyl-coenzyme A synthetase 2 (679 aa).

The interval 1–32 (MTSSPTHQVVHEANNIKKQETPKEFFERQPRQ) is disordered. A compositionally biased stretch (basic and acidic residues) spans 14–30 (NNIKKQETPKEFFERQP). CoA is bound by residues 207–210 (RGGK) and threonine 326. Residues 402–404 (GEP), 426–431 (DTYWQT), aspartate 517, and arginine 532 each bind ATP. Residue serine 540 participates in CoA binding. Position 543 (arginine 543) interacts with ATP. Position 611 (arginine 611) interacts with CoA.

It belongs to the ATP-dependent AMP-binding enzyme family.

The enzyme catalyses acetate + ATP + CoA = acetyl-CoA + AMP + diphosphate. The chain is Acetyl-coenzyme A synthetase 2 (ACS2) from Debaryomyces hansenii (strain ATCC 36239 / CBS 767 / BCRC 21394 / JCM 1990 / NBRC 0083 / IGC 2968) (Yeast).